The sequence spans 213 residues: Orotate phosphoribosyltransferase (213 aa).

Lys26 lines the 5-phospho-alpha-D-ribose 1-diphosphate pocket. 34-35 (FF) lines the orotate pocket. 5-phospho-alpha-D-ribose 1-diphosphate-binding positions include 72-73 (YK), Arg98, Lys99, Lys102, His104, and 123-131 (DDVISAGTS). Orotate contacts are provided by Ser127 and Arg155.

Belongs to the purine/pyrimidine phosphoribosyltransferase family. PyrE subfamily. As to quaternary structure, homodimer. Mg(2+) serves as cofactor.

The enzyme catalyses orotidine 5'-phosphate + diphosphate = orotate + 5-phospho-alpha-D-ribose 1-diphosphate. Its pathway is pyrimidine metabolism; UMP biosynthesis via de novo pathway; UMP from orotate: step 1/2. Its function is as follows. Catalyzes the transfer of a ribosyl phosphate group from 5-phosphoribose 1-diphosphate to orotate, leading to the formation of orotidine monophosphate (OMP). This chain is Orotate phosphoribosyltransferase, found in Neisseria meningitidis serogroup C (strain 053442).